The primary structure comprises 288 residues: Zinc finger protein ZAT9 (288 aa).

The C2H2-type 1 zinc finger occupies Y4–H26. Disordered regions lie at residues G20–K82, S101–T123, and G189–E210. The span at P37–D52 shows a compositional bias: polar residues. 2 C2H2-type zinc fingers span residues Y173–H195 and H224–H246.

It localises to the nucleus. In terms of biological role, probable transcription factor that may be involved in stress responses. The chain is Zinc finger protein ZAT9 (ZAT9) from Arabidopsis thaliana (Mouse-ear cress).